A 142-amino-acid polypeptide reads, in one-letter code: Hemoglobin subunit alpha-A (142 aa).

Residues 2–142 form the Globin domain; the sequence is VLSAADKTNV…VGAVLTAKYR (141 aa). Position 59 (histidine 59) interacts with O2. Histidine 88 contributes to the heme b binding site.

It belongs to the globin family. As to quaternary structure, heterotetramer of two alpha chains and two beta chains. Red blood cells.

Functionally, involved in oxygen transport from the lung to the various peripheral tissues. The sequence is that of Hemoglobin subunit alpha-A (HBAA) from Anas platyrhynchos platyrhynchos (Northern mallard).